Here is a 433-residue protein sequence, read N- to C-terminus: Enolase (433 aa).

Q164 provides a ligand contact to (2R)-2-phosphoglycerate. E206 (proton donor) is an active-site residue. Mg(2+)-binding residues include D243, E289, and D316. Residues K341, R370, S371, and K392 each coordinate (2R)-2-phosphoglycerate. The active-site Proton acceptor is K341.

This sequence belongs to the enolase family. Requires Mg(2+) as cofactor.

It localises to the cytoplasm. The protein localises to the secreted. Its subcellular location is the cell surface. The enzyme catalyses (2R)-2-phosphoglycerate = phosphoenolpyruvate + H2O. Its pathway is carbohydrate degradation; glycolysis; pyruvate from D-glyceraldehyde 3-phosphate: step 4/5. Its function is as follows. Catalyzes the reversible conversion of 2-phosphoglycerate (2-PG) into phosphoenolpyruvate (PEP). It is essential for the degradation of carbohydrates via glycolysis. In Borreliella afzelii (strain PKo) (Borrelia afzelii), this protein is Enolase.